The primary structure comprises 252 residues: MTWRATVLTLFPEMFPGPLGVSLAGRGLAAGLWALEARDIRDSATDRHRSVDDTPAGGGPGMVLRADVLAAAIDAADPVPGRPRLVMSPRGRPLTQARVAELAAGPGPLIVCGRFEGIDQRVIDARNLEEVSIGDYVLSGGEIAALALIDACVRLLPGVMGKLDSSAEESFSAGLLEYPQYTRPKSFEGRPIPEILTSGDHAKVAAWRQAEAEALTRARRPDLWAARSVARPAANAPAKGESQKTPKNKTDG.

S-adenosyl-L-methionine contacts are provided by residues Gly113 and 133 to 138; that span reads IGDYVL. Residues 229-238 are compositionally biased toward low complexity; sequence VARPAANAPA. A disordered region spans residues 229–252; that stretch reads VARPAANAPAKGESQKTPKNKTDG. Residues 241 to 252 are compositionally biased toward basic and acidic residues; sequence ESQKTPKNKTDG.

It belongs to the RNA methyltransferase TrmD family. As to quaternary structure, homodimer.

It is found in the cytoplasm. The enzyme catalyses guanosine(37) in tRNA + S-adenosyl-L-methionine = N(1)-methylguanosine(37) in tRNA + S-adenosyl-L-homocysteine + H(+). Specifically methylates guanosine-37 in various tRNAs. This is tRNA (guanine-N(1)-)-methyltransferase from Rhodopseudomonas palustris (strain HaA2).